The chain runs to 350 residues: Dihydroorotase (350 aa).

Histidine 17 and histidine 19 together coordinate Zn(2+). Substrate contacts are provided by residues 19 to 21 (HLR) and asparagine 45. Residues lysine 103, histidine 140, and histidine 178 each contribute to the Zn(2+) site. Position 103 is an N6-carboxylysine (lysine 103). Substrate is bound at residue histidine 140. Leucine 224 contributes to the substrate binding site. Aspartate 252 is a Zn(2+) binding site. Residue aspartate 252 is part of the active site. Histidine 256 and alanine 268 together coordinate substrate.

The protein belongs to the metallo-dependent hydrolases superfamily. DHOase family. Class II DHOase subfamily. In terms of assembly, homodimer. Requires Zn(2+) as cofactor.

The catalysed reaction is (S)-dihydroorotate + H2O = N-carbamoyl-L-aspartate + H(+). It functions in the pathway pyrimidine metabolism; UMP biosynthesis via de novo pathway; (S)-dihydroorotate from bicarbonate: step 3/3. Functionally, catalyzes the reversible cyclization of carbamoyl aspartate to dihydroorotate. The sequence is that of Dihydroorotase from Buchnera aphidicola subsp. Acyrthosiphon pisum (strain APS) (Acyrthosiphon pisum symbiotic bacterium).